Here is a 190-residue protein sequence, read N- to C-terminus: Bifunctional protein PyrR (190 aa).

The PRPP-binding signature appears at 112–124 (VILVDDVLYSGRS).

It belongs to the purine/pyrimidine phosphoribosyltransferase family. PyrR subfamily.

The enzyme catalyses UMP + diphosphate = 5-phospho-alpha-D-ribose 1-diphosphate + uracil. Regulates the transcription of the pyrimidine nucleotide (pyr) operon in response to exogenous pyrimidines. Functionally, also displays a weak uracil phosphoribosyltransferase activity which is not physiologically significant. The chain is Bifunctional protein PyrR from Mycolicibacterium paratuberculosis (strain ATCC BAA-968 / K-10) (Mycobacterium paratuberculosis).